Reading from the N-terminus, the 453-residue chain is Zinc finger CCCH domain-containing protein 26 (453 aa).

Positions 1–15 are enriched in polar residues; that stretch reads MSETQQQVQNSTGSI. Residues 1-47 are disordered; the sequence is MSETQQQVQNSTGSIRSPDKIEDTFRRMKVNEDNMEQSSPYPDRPGE. Residue serine 2 is modified to N-acetylserine. A compositionally biased stretch (basic and acidic residues) spans 17–32; that stretch reads SPDKIEDTFRRMKVNE. C3H1-type zinc fingers lie at residues 44–72, 95–112, 129–157, 261–289, and 307–335; these read RPGE…HPLT, ETGA…HPKD, RQGE…HPHP, FSER…HPKE, and RPGQ…HSML. Positions 360–379 are enriched in polar residues; sequence STNLRISSPPSPSDMTTLSN. Positions 360-453 are disordered; the sequence is STNLRISSPP…KVQDSSDKST (94 aa). Residues 391–407 show a composition bias toward basic and acidic residues; the sequence is ETEKQDDSPTEPEKSEV. Over residues 413-422 the composition is skewed to polar residues; that stretch reads PNGSDSTSLP. Positions 441–453 are enriched in basic and acidic residues; it reads DSSKVQDSSDKST.

The protein localises to the nucleus. The polypeptide is Zinc finger CCCH domain-containing protein 26 (ZFN2) (Arabidopsis thaliana (Mouse-ear cress)).